An 861-amino-acid polypeptide reads, in one-letter code: Probable beta-glucosidase A (861 aa).

Residues 1–19 (MKLSILEAAALTAASVVSA) form the signal peptide. Residues N62, N212, and N253 are each glycosylated (N-linked (GlcNAc...) asparagine). The active site involves D281. 8 N-linked (GlcNAc...) asparagine glycosylation sites follow: N316, N323, N355, N524, N543, N565, N669, and N713. The disordered stretch occupies residues 735-754 (PEGATDGSPQPRLPASGGPG).

It belongs to the glycosyl hydrolase 3 family.

Its subcellular location is the secreted. The catalysed reaction is Hydrolysis of terminal, non-reducing beta-D-glucosyl residues with release of beta-D-glucose.. Its pathway is glycan metabolism; cellulose degradation. In terms of biological role, beta-glucosidases are one of a number of cellulolytic enzymes involved in the degradation of cellulosic biomass. Catalyzes the last step releasing glucose from the inhibitory cellobiose. In Aspergillus terreus (strain NIH 2624 / FGSC A1156), this protein is Probable beta-glucosidase A (bglA).